A 311-amino-acid polypeptide reads, in one-letter code: MFVSRELSDASGKSIPPKSGIYDYITLLKPRVMSLVVFTALVGLVVSPVSINPWYGFLAILCIAIGGGGAGVLNMWYDADIDAVMKRTKNRPIPSGKISSRKAFVFGMVLSMLSVLMMGKFINWFAALLLAFTIFFYIVIYTIWLKRRTPQNIVIGGAAGAFPPMIGCAAATGTVNIESFLLFLIIFMWTPPHFWSLSLFSSLDYGAAGIPMMPNVRGERSTKKQILFYTILMTISAAGPFIIDFAGIFYAIFSTILSVIFIYFAYRLWKADTYDATILMAKKTFFFSLFYLAAIFGILLIEFLVWYFIIL.

9 helical membrane passes run 32-52 (VMSL…VSIN), 53-73 (PWYG…AGVL), 104-124 (FVFG…FINW), 125-145 (FAAL…TIWL), 153-173 (IVIG…AATG), 180-200 (FLLF…LSLF), 224-244 (KQIL…FIID), 245-265 (FAGI…IYFA), and 290-310 (FYLA…YFII).

It belongs to the UbiA prenyltransferase family. Protoheme IX farnesyltransferase subfamily.

The protein localises to the cell inner membrane. The catalysed reaction is heme b + (2E,6E)-farnesyl diphosphate + H2O = Fe(II)-heme o + diphosphate. The protein operates within porphyrin-containing compound metabolism; heme O biosynthesis; heme O from protoheme: step 1/1. Converts heme B (protoheme IX) to heme O by substitution of the vinyl group on carbon 2 of heme B porphyrin ring with a hydroxyethyl farnesyl side group. The sequence is that of Protoheme IX farnesyltransferase from Bartonella quintana (strain Toulouse) (Rochalimaea quintana).